The chain runs to 796 residues: Nuclear GTPase SLIP-GC (796 aa).

A compositionally biased stretch (basic and acidic residues) spans 1-22 (MAETKDVFGQEPHPVEDDLYKE). The tract at residues 1-35 (MAETKDVFGQEPHPVEDDLYKERTRKRRKSDRDQR) is disordered. 107–114 (GSTGAGKS) lines the GTP pocket. 2 coiled-coil regions span residues 158–185 (SDQEWREELKNLTKLLHRTEELSREEAD) and 745–775 (KELADVGSEYKEMEKLHRSLREVAENARLRK).

In terms of tissue distribution, expressed in germinal center B-cell and in lymphomas derived from germinal center B-cell.

It localises to the nucleus speckle. Functionally, nuclear GTPase found in germinal center B-cells, where it may inhibit function of the activation-induced cytidine deaminase AICDA. Reduces somatic hypermutation in B-cells which may enhance genome stability. The sequence is that of Nuclear GTPase SLIP-GC (NUGGC) from Homo sapiens (Human).